Consider the following 619-residue polypeptide: MATRPGPLTEWPWHRLGNFKYVVMAPVVAHGARRVMRNGWGDLDIAFSLILPSLLLRMIHNQIWISLSRYQTARSKHRIVDRGIEFDQVDRERGWDDQILFNGLVFYAGYLAMPSVRRMPVWRTDGAVVTALVHTGPVEFLYYWFHRALHHHFLYSRYHSHHHASIVTEPITSVIHPFAEHVVYFILFAIPILSTIYLGNVSAMGIVGYIAYIDFMNNMGHCNFELVPEWIFQIFPPLKYLIYTPSFHSLHHTQFRTNYSLFMPFYDYIYNTMDKSSDELYESSLKGTEETPDLVHLTHMTNLQSAYHLRIGIASIASKPYSDSAWYMWTLWPLAWLSMVLAWIYGSSAFVVERIKLNKMKMQTWALPRYNFQYGLTWEREPINDLIEKAILDADMKGVKVISLGLLNQAKQLNGNGELFRQKYPKLGVRIIDGSGLATAVVLKSIPSDAKKVFLRTGTSKIARAIAIALCDRGVQVIMNEKEVYHMLKSQIPENRASYLKLSSDNVPQLWIVHNIDDNEQKMAPKGTIFIPISQFPLKKLRKDCTYMSTPAMRIPEEMKNIHSCENWLPRRVMSAWHIAGILHALEGWNMHECGDEMMDIEKSWSAAIRHGFLPLTKA.

5 helical membrane-spanning segments follow: residues 45-65 (IAFS…QIWI), 94-114 (GWDD…LAMP), 126-146 (GAVV…YWFH), 178-198 (FAEH…TIYL), and 325-345 (AWYM…AWIY). The Fatty acid hydroxylase domain occupies 138–272 (VEFLYYWFHR…MPFYDYIYNT (135 aa)).

This sequence belongs to the sterol desaturase family. In terms of assembly, homodimer. Expressed ubiquitously at low levels, with higher accumulation in developing panicles, shoots and flag leaves.

Its subcellular location is the endoplasmic reticulum membrane. The catalysed reaction is a long-chain fatty aldehyde + 2 NADPH + O2 + H(+) = a long-chain alkane + formate + 2 NADP(+) + H2O. In terms of biological role, aldehyde decarbonylase involved in the conversion of aldehydes to alkanes. Core component of a very-long-chain alkane synthesis complex. The protein is Very-long-chain aldehyde decarbonylase GL1-4 of Oryza sativa subsp. japonica (Rice).